The primary structure comprises 442 residues: 3-phosphoshikimate 1-carboxyvinyltransferase (442 aa).

Lysine 25, serine 26, and arginine 30 together coordinate 3-phosphoshikimate. Residue lysine 25 coordinates phosphoenolpyruvate. Phosphoenolpyruvate is bound by residues glycine 96 and arginine 124. Positions 171, 172, 173, 203, 325, and 352 each coordinate 3-phosphoshikimate. Position 173 (glutamine 173) interacts with phosphoenolpyruvate. Aspartate 325 functions as the Proton acceptor in the catalytic mechanism. Residues arginine 356, arginine 400, and lysine 425 each coordinate phosphoenolpyruvate.

It belongs to the EPSP synthase family. Monomer.

It is found in the cytoplasm. It catalyses the reaction 3-phosphoshikimate + phosphoenolpyruvate = 5-O-(1-carboxyvinyl)-3-phosphoshikimate + phosphate. It functions in the pathway metabolic intermediate biosynthesis; chorismate biosynthesis; chorismate from D-erythrose 4-phosphate and phosphoenolpyruvate: step 6/7. Its function is as follows. Catalyzes the transfer of the enolpyruvyl moiety of phosphoenolpyruvate (PEP) to the 5-hydroxyl of shikimate-3-phosphate (S3P) to produce enolpyruvyl shikimate-3-phosphate and inorganic phosphate. This is 3-phosphoshikimate 1-carboxyvinyltransferase from Bordetella parapertussis (strain 12822 / ATCC BAA-587 / NCTC 13253).